Here is an 803-residue protein sequence, read N- to C-terminus: Ras GTPase-activating protein 4B (803 aa).

C2 domains lie at 1–105 (MAKR…SGWA) and 116–232 (VQGE…EGWF). 12 residues coordinate Ca(2+): aspartate 21, aspartate 27, aspartate 74, aspartate 76, serine 79, aspartate 82, aspartate 149, aspartate 155, aspartate 202, aspartate 204, serine 207, and aspartate 210. One can recognise a Ras-GAP domain in the interval 318–546 (GLAKDFLDLL…AQLKDFITKL (229 aa)). The PH domain maps to 566–673 (PPVKEGPLFI…WLSALRKVSI (108 aa)). The segment at 675–711 (NTGLLGSYHPGVFRGDKWSCCHQKEKTGQGCDKTRSR) adopts a Btk-type zinc-finger fold. Zn(2+) contacts are provided by histidine 683, cysteine 694, cysteine 695, and cysteine 705. A disordered region spans residues 781-803 (EAHSSSPAGSPPSEPNCLLELQT).

The cofactor is Ca(2+).

The protein resides in the cytoplasm. It localises to the cytosol. It is found in the cell membrane. Ca(2+)-dependent Ras GTPase-activating protein, that may play a role in the Ras-MAPK pathway. The chain is Ras GTPase-activating protein 4B (RASA4B) from Homo sapiens (Human).